Reading from the N-terminus, the 193-residue chain is Ectoine TRAP transporter small permease protein TeaB (193 aa).

The next 4 helical transmembrane spans lie at 33-55 (ILAL…RFAL), 65-82 (VNRI…GYAA), 103-125 (RALM…YYSV), and 145-167 (IFII…LFTA).

This sequence belongs to the TRAP transporter small permease family. As to quaternary structure, the complex comprises the extracytoplasmic solute receptor protein TeaA, and the two transmembrane proteins TeaB and TeaC.

Its subcellular location is the cell inner membrane. Part of the tripartite ATP-independent periplasmic (TRAP) transport system TeaABC involved in the uptake of ectoine and hydroxyectoine in response to osmotic upshock. Probably functions as a recovery system for synthesized ectoine that leaks out of the cell. This is Ectoine TRAP transporter small permease protein TeaB (teaB) from Halomonas elongata (strain ATCC 33173 / DSM 2581 / NBRC 15536 / NCIMB 2198 / 1H9).